A 491-amino-acid polypeptide reads, in one-letter code: Cobyric acid synthase (491 aa).

The GATase cobBQ-type domain maps to 250-439; sequence EVTIAVIRLP…LHGIFDNGAW (190 aa). Cysteine 331 serves as the catalytic Nucleophile. The active site involves histidine 431.

The protein belongs to the CobB/CobQ family. CobQ subfamily.

Its pathway is cofactor biosynthesis; adenosylcobalamin biosynthesis. Functionally, catalyzes amidations at positions B, D, E, and G on adenosylcobyrinic A,C-diamide. NH(2) groups are provided by glutamine, and one molecule of ATP is hydrogenolyzed for each amidation. This is Cobyric acid synthase from Synechococcus elongatus (strain ATCC 33912 / PCC 7942 / FACHB-805) (Anacystis nidulans R2).